The following is a 615-amino-acid chain: Proteasome-associated ATPase (615 aa).

Positions 1 to 27 (MSESERSEASEVFGTSPDSRLSSEDAA) are disordered. Residues 22 to 99 (SSEDAAELEQ…LREEVDRLGQ (78 aa)) adopt a coiled-coil conformation. Residue 302–307 (GCGKTL) participates in ATP binding. The tract at residues 614–615 (YL) is docks into pockets in the proteasome alpha-ring.

This sequence belongs to the AAA ATPase family. As to quaternary structure, homohexamer. Assembles into a hexameric ring structure that caps the 20S proteasome core. Strongly interacts with the prokaryotic ubiquitin-like protein Pup through a hydrophobic interface; the interacting region of ARC lies in its N-terminal coiled-coil domain. There is one Pup binding site per ARC hexamer ring. Upon ATP-binding, the C-terminus of ARC interacts with the alpha-rings of the proteasome core, possibly by binding to the intersubunit pockets.

It functions in the pathway protein degradation; proteasomal Pup-dependent pathway. Its function is as follows. ATPase which is responsible for recognizing, binding, unfolding and translocation of pupylated proteins into the bacterial 20S proteasome core particle. May be essential for opening the gate of the 20S proteasome via an interaction with its C-terminus, thereby allowing substrate entry and access to the site of proteolysis. Thus, the C-termini of the proteasomal ATPase may function like a 'key in a lock' to induce gate opening and therefore regulate proteolysis. In Mycolicibacterium vanbaalenii (strain DSM 7251 / JCM 13017 / BCRC 16820 / KCTC 9966 / NRRL B-24157 / PYR-1) (Mycobacterium vanbaalenii), this protein is Proteasome-associated ATPase.